The chain runs to 830 residues: Serine/threonine-protein kinase pkn2 (830 aa).

The Cytoplasmic segment spans residues M1–E605. Residues F13–L283 enclose the Protein kinase domain. ATP-binding positions include L19–V27 and K42. The active-site Proton acceptor is the D135. A disordered region spans residues V296 to G326. Low complexity predominate over residues P299–G326. A Guanylate cyclase domain is found at T396 to E511. Residues A606–L623 form a helical membrane-spanning segment. Residues S624–D830 lie on the Periplasmic side of the membrane.

It belongs to the protein kinase superfamily. Ser/Thr protein kinase family.

It is found in the cell membrane. The catalysed reaction is L-seryl-[protein] + ATP = O-phospho-L-seryl-[protein] + ADP + H(+). It catalyses the reaction L-threonyl-[protein] + ATP = O-phospho-L-threonyl-[protein] + ADP + H(+). In terms of biological role, regulates the activity of endogenous beta-lactamase or related enzymes, by blocking their secretion by phosphorylation, in response to an external signal yet to be identified. In Myxococcus xanthus, this protein is Serine/threonine-protein kinase pkn2 (pkn2).